The primary structure comprises 144 residues: Large ribosomal subunit protein uL15 (144 aa).

The segment at 1 to 57 (MKLNDLSPAPGSRREKHRPGRGIGSGLGKTGGRGHKGQTSRSGGSIAPGFEGGQQPL) is disordered. Gly residues predominate over residues 21-31 (RGIGSGLGKTG).

The protein belongs to the universal ribosomal protein uL15 family. Part of the 50S ribosomal subunit.

Its function is as follows. Binds to the 23S rRNA. In Pseudomonas entomophila (strain L48), this protein is Large ribosomal subunit protein uL15.